The primary structure comprises 126 residues: Major sperm protein 2 (126 aa).

Alanine 2 is subject to N-acetylalanine. The MSP domain occupies aspartate 8–asparagine 125.

In terms of tissue distribution, sperm.

Its subcellular location is the cell projection. It is found in the pseudopodium. The protein resides in the cytoplasm. It localises to the cytoskeleton. Its function is as follows. Central component in molecular interactions underlying sperm crawling. Forms an extensive filament system that extends from sperm villipoda, along the leading edge of the pseudopod. The protein is Major sperm protein 2 (MSP-2) of Globodera rostochiensis (Golden nematode worm).